The sequence spans 498 residues: ATP synthase subunit beta, chloroplastic (498 aa).

Position 172–179 (172–179) interacts with ATP; it reads GGAGVGKT.

The protein belongs to the ATPase alpha/beta chains family. In terms of assembly, F-type ATPases have 2 components, CF(1) - the catalytic core - and CF(0) - the membrane proton channel. CF(1) has five subunits: alpha(3), beta(3), gamma(1), delta(1), epsilon(1). CF(0) has four main subunits: a(1), b(1), b'(1) and c(9-12).

The protein resides in the plastid. It localises to the chloroplast thylakoid membrane. The catalysed reaction is ATP + H2O + 4 H(+)(in) = ADP + phosphate + 5 H(+)(out). Produces ATP from ADP in the presence of a proton gradient across the membrane. The catalytic sites are hosted primarily by the beta subunits. The protein is ATP synthase subunit beta, chloroplastic of Canella winterana (Wild cinnamon).